The sequence spans 617 residues: KIF-binding protein (617 aa).

The segment at 48–83 (ALLGPAPEDEDEPAADDGPGDQALGAGEPREAEGPG) is disordered. Acidic residues predominate over residues 54-66 (PEDEDEPAADDGP). Phosphoserine is present on serine 174.

This sequence belongs to the KIF-binding protein family. Interacts with KIF1B; positively regulates KIF1B microtubule motor activity. Interacts with STMN2. In the embryo it is expressed in cortical neurons; expression increases during neuronal development.

It is found in the cytoplasm. Its subcellular location is the cytoskeleton. Activator of KIF1B plus-end-directed microtubule motor activity. Required for organization of axonal microtubules, and axonal outgrowth and maintenance during peripheral and central nervous system development. This chain is KIF-binding protein, found in Mus musculus (Mouse).